The chain runs to 579 residues: Thiol:disulfide interchange protein DsbD (579 aa).

The first 16 residues, 1 to 16 (MKKLFLFFTLIFTAFA), serve as a signal peptide directing secretion. 2 disulfides stabilise this stretch: C124/C129 and C193/C315. 8 helical membrane passes run 178–198 (IFGF…LPML), 230–250 (LTYT…QIAL), 254–274 (YVMI…FGLF), 296–316 (GAFG…SPCT), 337–357 (AATL…ITLF), 376–396 (FGFV…PEVW), 397–417 (EPRL…LQMS), and 420–440 (GFGY…VQPL). Positions 449-579 (TTTQSAVENK…AFSNWLKALH (131 aa)) constitute a Thioredoxin domain. A disulfide bridge connects residues C495 and C498.

Belongs to the thioredoxin family. DsbD subfamily.

It localises to the cell inner membrane. The enzyme catalyses [protein]-dithiol + NAD(+) = [protein]-disulfide + NADH + H(+). It catalyses the reaction [protein]-dithiol + NADP(+) = [protein]-disulfide + NADPH + H(+). In terms of biological role, required to facilitate the formation of correct disulfide bonds in some periplasmic proteins and for the assembly of the periplasmic c-type cytochromes. Acts by transferring electrons from cytoplasmic thioredoxin to the periplasm. This transfer involves a cascade of disulfide bond formation and reduction steps. This is Thiol:disulfide interchange protein DsbD from Haemophilus influenzae (strain PittEE).